We begin with the raw amino-acid sequence, 301 residues long: Homoserine O-acetyltransferase (301 aa).

Cys-142 (acyl-thioester intermediate) is an active-site residue. Substrate contacts are provided by Lys-163 and Ser-192. His-235 serves as the catalytic Proton acceptor. The active site involves Glu-237. Arg-249 serves as a coordination point for substrate.

The protein belongs to the MetA family.

The protein resides in the cytoplasm. It carries out the reaction L-homoserine + acetyl-CoA = O-acetyl-L-homoserine + CoA. Its pathway is amino-acid biosynthesis; L-methionine biosynthesis via de novo pathway; O-acetyl-L-homoserine from L-homoserine: step 1/1. In terms of biological role, transfers an acetyl group from acetyl-CoA to L-homoserine, forming acetyl-L-homoserine. The chain is Homoserine O-acetyltransferase from Bacillus anthracis (strain A0248).